The sequence spans 303 residues: Methionyl-tRNA formyltransferase (303 aa).

Residue 108–111 coordinates (6S)-5,6,7,8-tetrahydrofolate; the sequence is SDLP.

The protein belongs to the Fmt family.

It carries out the reaction L-methionyl-tRNA(fMet) + (6R)-10-formyltetrahydrofolate = N-formyl-L-methionyl-tRNA(fMet) + (6S)-5,6,7,8-tetrahydrofolate + H(+). Functionally, attaches a formyl group to the free amino group of methionyl-tRNA(fMet). The formyl group appears to play a dual role in the initiator identity of N-formylmethionyl-tRNA by promoting its recognition by IF2 and preventing the misappropriation of this tRNA by the elongation apparatus. The polypeptide is Methionyl-tRNA formyltransferase (Rickettsia rickettsii (strain Iowa)).